The sequence spans 105 residues: Small ribosomal subunit protein uS10 (105 aa).

Belongs to the universal ribosomal protein uS10 family. Part of the 30S ribosomal subunit.

In terms of biological role, involved in the binding of tRNA to the ribosomes. The sequence is that of Small ribosomal subunit protein uS10 from Rickettsia typhi (strain ATCC VR-144 / Wilmington).